Consider the following 458-residue polypeptide: Monomethylamine methyltransferase MtmB (458 aa).

A non-standard amino acid (pyrrolysine) is located at residue O202.

Belongs to the monomethylamine methyltransferase family. Can form a complex with MtmC.

The catalysed reaction is Co(I)-[methylamine-specific corrinoid protein] + methylamine + H(+) = methyl-Co(III)-[methylamine-specific corrinoid protein] + NH4(+). The protein operates within one-carbon metabolism; methanogenesis from methylamine. Its function is as follows. Catalyzes the transfer of the methyl group from monomethylamine to the corrinoid cofactor of MtmC. The protein is Monomethylamine methyltransferase MtmB (mtmB1) of Methanosarcina mazei (strain ATCC BAA-159 / DSM 3647 / Goe1 / Go1 / JCM 11833 / OCM 88) (Methanosarcina frisia).